The sequence spans 399 residues: MAKLTVKDVELKGKKVLVRVDFNVPVKDGVITNDNRITAALPTIKYILEQGGRAILFSHLGRVKEEADKEGKSLAPVAADLAAKLGQDVKFIPGVTRGAELEAAVNSLEDGQVLLVENTRFEDVDGKKESKNDPELGKYWASLGDGIFVNDAFGTAHRAHASNVGISANVEKAVAGFLLENEIAYIQEAVENPERPFVAILGGSKVSDKIGVIENLLEKADKVLIGGGMTYTFFKAQGIEIGNSLVEEDKLDVAKALLEKSNGKLILPVDSKEANAFADYTEVKYTEGEAVDPGFLGLDIGPKSIAKFDEALTGAKTVVWNGPMGVFENPDFQAGTIGVMDAIVKQPGVKSIIGGGDSAAAAINLGYADKFSWISTGGGASMELLEGKELPGLAALTEK.

Substrate is bound by residues 21–23, arginine 36, 59–62, arginine 120, and arginine 158; these read DFN and HLGR. ATP-binding positions include lysine 209, glycine 297, glutamate 328, and 355–358; that span reads GGDS.

It belongs to the phosphoglycerate kinase family. As to quaternary structure, monomer.

The protein localises to the cytoplasm. The enzyme catalyses (2R)-3-phosphoglycerate + ATP = (2R)-3-phospho-glyceroyl phosphate + ADP. It participates in carbohydrate degradation; glycolysis; pyruvate from D-glyceraldehyde 3-phosphate: step 2/5. The chain is Phosphoglycerate kinase from Streptococcus thermophilus (strain ATCC BAA-250 / LMG 18311).